The chain runs to 277 residues: Thymidylate synthase (277 aa).

Arg-21 lines the dUMP pocket. Residue His-51 participates in (6R)-5,10-methylene-5,6,7,8-tetrahydrofolate binding. 126–127 lines the dUMP pocket; the sequence is RR. The active-site Nucleophile is Cys-159. DUMP is bound by residues 179 to 182, Asn-190, and 220 to 222; these read RSAD and HLY. Residue Asp-182 participates in (6R)-5,10-methylene-5,6,7,8-tetrahydrofolate binding. Ser-276 provides a ligand contact to (6R)-5,10-methylene-5,6,7,8-tetrahydrofolate.

The protein belongs to the thymidylate synthase family. Bacterial-type ThyA subfamily. In terms of assembly, homodimer.

Its subcellular location is the cytoplasm. It catalyses the reaction dUMP + (6R)-5,10-methylene-5,6,7,8-tetrahydrofolate = 7,8-dihydrofolate + dTMP. It functions in the pathway pyrimidine metabolism; dTTP biosynthesis. Catalyzes the reductive methylation of 2'-deoxyuridine-5'-monophosphate (dUMP) to 2'-deoxythymidine-5'-monophosphate (dTMP) while utilizing 5,10-methylenetetrahydrofolate (mTHF) as the methyl donor and reductant in the reaction, yielding dihydrofolate (DHF) as a by-product. This enzymatic reaction provides an intracellular de novo source of dTMP, an essential precursor for DNA biosynthesis. The polypeptide is Thymidylate synthase (Hydrogenovibrio crunogenus (strain DSM 25203 / XCL-2) (Thiomicrospira crunogena)).